The following is a 301-amino-acid chain: Troponin T, cardiac muscle (301 aa).

Residues 1–72 (MSDAEEVVEE…EAKDAEEGPV (72 aa)) show a composition bias toward acidic residues. 2 disordered regions span residues 1–97 (MSDA…DGER) and 125–224 (NRKK…KKKI). At serine 2 the chain carries N-acetylserine. Phosphoserine; by CK2 is present on serine 2. Composition is skewed to basic and acidic residues over residues 125–186 (NRKK…DEAR) and 206–224 (QTER…KKKI). Position 207 is a phosphothreonine; by PKC/PRKCA (threonine 207). Serine 211 is modified (phosphoserine; by PKC/PRKCA). Threonine 216 is subject to Phosphothreonine; by PKC/PRKCA and RAF1. Threonine 297 carries the phosphothreonine; by PKC/PRKCA modification.

This sequence belongs to the troponin T family. Phosphorylation at Thr-216 by PRKCA induces significant reduction in myofilament calcium sensitivity and actomyosin ATPase activity.

In terms of biological role, troponin T is the tropomyosin-binding subunit of troponin, the thin filament regulatory complex which confers calcium-sensitivity to striated muscle actomyosin ATPase activity. This Mus musculus (Mouse) protein is Troponin T, cardiac muscle (Tnnt2).